The chain runs to 317 residues: Beta-ketoacyl-[acyl-carrier-protein] synthase III (317 aa).

Active-site residues include Cys-112 and His-244. Residues 245–249 (QANLR) are ACP-binding. Asn-274 is a catalytic residue.

Belongs to the thiolase-like superfamily. FabH family. Homodimer.

The protein localises to the cytoplasm. It carries out the reaction malonyl-[ACP] + acetyl-CoA + H(+) = 3-oxobutanoyl-[ACP] + CO2 + CoA. It functions in the pathway lipid metabolism; fatty acid biosynthesis. Catalyzes the condensation reaction of fatty acid synthesis by the addition to an acyl acceptor of two carbons from malonyl-ACP. Catalyzes the first condensation reaction which initiates fatty acid synthesis and may therefore play a role in governing the total rate of fatty acid production. Possesses both acetoacetyl-ACP synthase and acetyl transacylase activities. Its substrate specificity determines the biosynthesis of branched-chain and/or straight-chain of fatty acids. The chain is Beta-ketoacyl-[acyl-carrier-protein] synthase III from Pasteurella multocida (strain Pm70).